The sequence spans 154 residues: 6,7-dimethyl-8-ribityllumazine synthase (154 aa).

5-amino-6-(D-ribitylamino)uracil contacts are provided by residues F15, 47–49 (TFD), and 71–73 (AVI). Residue 76 to 77 (ET) coordinates (2S)-2-hydroxy-3-oxobutyl phosphate. The active-site Proton donor is H79. L104 contacts 5-amino-6-(D-ribitylamino)uracil. A (2S)-2-hydroxy-3-oxobutyl phosphate-binding site is contributed by R119.

It belongs to the DMRL synthase family.

The catalysed reaction is (2S)-2-hydroxy-3-oxobutyl phosphate + 5-amino-6-(D-ribitylamino)uracil = 6,7-dimethyl-8-(1-D-ribityl)lumazine + phosphate + 2 H2O + H(+). It functions in the pathway cofactor biosynthesis; riboflavin biosynthesis; riboflavin from 2-hydroxy-3-oxobutyl phosphate and 5-amino-6-(D-ribitylamino)uracil: step 1/2. In terms of biological role, catalyzes the formation of 6,7-dimethyl-8-ribityllumazine by condensation of 5-amino-6-(D-ribitylamino)uracil with 3,4-dihydroxy-2-butanone 4-phosphate. This is the penultimate step in the biosynthesis of riboflavin. This is 6,7-dimethyl-8-ribityllumazine synthase from Saccharolobus solfataricus (strain ATCC 35092 / DSM 1617 / JCM 11322 / P2) (Sulfolobus solfataricus).